The chain runs to 124 residues: Large ribosomal subunit protein bL12 (124 aa).

Residues Ala94–Lys124 form a disordered region.

Belongs to the bacterial ribosomal protein bL12 family. Homodimer. Part of the ribosomal stalk of the 50S ribosomal subunit. Forms a multimeric L10(L12)X complex, where L10 forms an elongated spine to which 2 to 4 L12 dimers bind in a sequential fashion. Binds GTP-bound translation factors.

Functionally, forms part of the ribosomal stalk which helps the ribosome interact with GTP-bound translation factors. Is thus essential for accurate translation. The sequence is that of Large ribosomal subunit protein bL12 from Paraburkholderia phytofirmans (strain DSM 17436 / LMG 22146 / PsJN) (Burkholderia phytofirmans).